The following is a 1213-amino-acid chain: Probable ATP-binding protein BrxC (1213 aa).

This sequence belongs to the BrxC family.

In terms of biological role, BREX systems (bacteriophage exclusion) provide immunity against bacteriophage. Part of a type 1 BREX system which protects against dsDNA phage. This system allows phage adsorption but prevents phage DNA replication, without degradation of the phage DNA. Methylation of bacterial DNA by PglX guides self/non-self discrimination. When the brxA-brxB-brxC-pglX-pglZ-brxL genes are transformed into a susceptible E.coli strain (BW25113) they confer very high resistance to infection by bacteriophage VR7 and VpaE1, about 100-fold protection against lambda, T5 and T7 and no protection against RNA phage Qbeta, ssDNA phage M13 or dSDNA phage T4 and VR5. Glycosylated phage DNA is not susceptible to BREX. The BREX system does not confer resistance to lysogenic lambda phage, i.e. prophage that are integrated into the chromosomal DNA and then induced to form phage. This chain is Probable ATP-binding protein BrxC, found in Escherichia coli O9:H4 (strain HS).